The following is a 197-amino-acid chain: Inner membrane-spanning protein YciB (197 aa).

Helical transmembrane passes span 36 to 56 (IYSATAMLIISSLVVYGALFL), 64 to 84 (GQWLTLIACLVFGGLTLTFHS), 90 to 110 (WKAPVVNWLFALGFAGSHFIG), 135 to 155 (LAWIAFFLFCGAANLFVAFTF), and 162 to 182 (FKVFGSLGMTVIFLVAQGVYL).

Belongs to the YciB family.

Its subcellular location is the cell inner membrane. Its function is as follows. Plays a role in cell envelope biogenesis, maintenance of cell envelope integrity and membrane homeostasis. This Pseudomonas putida (strain ATCC 700007 / DSM 6899 / JCM 31910 / BCRC 17059 / LMG 24140 / F1) protein is Inner membrane-spanning protein YciB.